A 124-amino-acid chain; its full sequence is MPTINQLTRIGRKAVFSRTKSPALQACPQKRGVCTRVMTVTPKKPNSALRKVARVRLSSGVEVTAYIPGIGHNLQEHSIVLIRGGRVKDLPGVRYHIIRGAKDTLGVVDRKRGRSKYGAKRPRA.

Position 89 is a 3-methylthioaspartic acid (aspartate 89).

Belongs to the universal ribosomal protein uS12 family. Part of the 30S ribosomal subunit. Contacts proteins S8 and S17. May interact with IF1 in the 30S initiation complex.

With S4 and S5 plays an important role in translational accuracy. Its function is as follows. Interacts with and stabilizes bases of the 16S rRNA that are involved in tRNA selection in the A site and with the mRNA backbone. Located at the interface of the 30S and 50S subunits, it traverses the body of the 30S subunit contacting proteins on the other side and probably holding the rRNA structure together. The combined cluster of proteins S8, S12 and S17 appears to hold together the shoulder and platform of the 30S subunit. The chain is Small ribosomal subunit protein uS12 from Treponema pallidum subsp. pallidum (strain SS14).